The following is a 152-amino-acid chain: Protein X (152 aa).

The tract at residues 68–115 (PCALRFTSATWRCMETPMNSVTCLRKRTLGLRTAPPTVMEQYIKDCLF) is mitochondrial targeting sequence.

The protein belongs to the orthohepadnavirus protein X family. May form homodimer. May interact with host CEBPA, CFLAR, CREB1, DDB1, E4F1, HBXIP, HSPD1/HSP60, NFKBIA, POLR2E and SMAD4. Interacts with host SMC5-SMC6 complex and induces its degradation. Interacts with host TRPC4AP; leading to prevent ubiquitination of TRPC4AP. Interacts with host PLSCR1; this interaction promotes ubiquitination and degradation of HBx and impairs HBx-mediated cell proliferation. Post-translationally, a fraction may be phosphorylated in insect cells and HepG2 cells, a human hepatoblastoma cell line. Phosphorylated in vitro by host protein kinase C or mitogen-activated protein kinase. N-acetylated in insect cells.

The protein resides in the host cytoplasm. It localises to the host nucleus. The protein localises to the host mitochondrion. Functionally, multifunctional protein that plays a role in silencing host antiviral defenses and promoting viral transcription. Does not seem to be essential for HBV infection. May be directly involved in development of cirrhosis and liver cancer (hepatocellular carcinoma). Most of cytosolic activities involve modulation of cytosolic calcium. The effect on apoptosis is controversial depending on the cell types in which the studies have been conducted. May induce apoptosis by localizing in mitochondria and causing loss of mitochondrial membrane potential. May also modulate apoptosis by binding host CFLAR, a key regulator of the death-inducing signaling complex (DISC). Promotes viral transcription by using the host E3 ubiquitin ligase DDB1 to target the SMC5-SMC6 complex to proteasomal degradation. This host complex would otherwise bind to viral episomal DNA, and prevents its transcription. Moderately stimulates transcription of many different viral and cellular transcription elements. Promoters and enhancers stimulated by HBx contain DNA binding sites for NF-kappa-B, AP-1, AP-2, c-EBP, ATF/CREB, or the calcium-activated factor NF-AT. This Lagothrix lagotricha (Brown woolly monkey) protein is Protein X.